The sequence spans 92 residues: C-C motif chemokine 4 (92 aa).

Residues Met1–Ser23 form the signal peptide. Cystine bridges form between Cys34–Cys58 and Cys35–Cys74.

Belongs to the intercrine beta (chemokine CC) family. In terms of assembly, homodimer.

The protein resides in the secreted. Functionally, monokine with inflammatory and chemokinetic properties. The polypeptide is C-C motif chemokine 4 (Ccl4) (Rattus norvegicus (Rat)).